Consider the following 650-residue polypeptide: Acetyl-coenzyme A synthetase (650 aa).

CoA is bound by residues 191–194, Thr-311, and Asn-335; that span reads RGGR. Residues 387-389, 411-416, Asp-500, and Arg-515 contribute to the ATP site; these read GEP and DTWWQT. Ser-523 is a binding site for CoA. Arg-526 is an ATP binding site. Positions 537, 539, and 542 each coordinate Mg(2+). Arg-584 contributes to the CoA binding site. At Lys-609 the chain carries N6-acetyllysine.

Belongs to the ATP-dependent AMP-binding enzyme family. Mg(2+) is required as a cofactor. In terms of processing, acetylated. Deacetylation by the SIR2-homolog deacetylase activates the enzyme.

It catalyses the reaction acetate + ATP + CoA = acetyl-CoA + AMP + diphosphate. Catalyzes the conversion of acetate into acetyl-CoA (AcCoA), an essential intermediate at the junction of anabolic and catabolic pathways. AcsA undergoes a two-step reaction. In the first half reaction, AcsA combines acetate with ATP to form acetyl-adenylate (AcAMP) intermediate. In the second half reaction, it can then transfer the acetyl group from AcAMP to the sulfhydryl group of CoA, forming the product AcCoA. This chain is Acetyl-coenzyme A synthetase, found in Shewanella baltica (strain OS195).